The chain runs to 2135 residues: Protein SUBSTANDARD STARCH GRAIN 4, chloroplastic (2135 aa).

2 stretches are compositionally biased toward low complexity: residues 1–10 and 72–84; these read MSHCLRASPF and QHQPLLPTRRQQQ. The transit peptide at 1–42 directs the protein to the chloroplast; the sequence is MSHCLRASPFLSPPPPLLHPSRRRRHRQGGCIHTSPGTRPLV. Disordered stretches follow at residues 1–44 and 58–89; these read MSHC…LVAR and SDSSDCPAPHHPHSQHQPLLPTRRQQQQPPPP. Residues 43 to 104 are Stromal-facing; sequence ARARFDPPPL…ASLAPLWREG (62 aa). Residues 105-125 traverse the membrane as a helical segment; sequence LFLVRCSVFAAALSVAAALSW. Topologically, residues 126 to 2135 are chloroplast intermembrane; sequence YAQLRARSFV…LFEYSATSQG (2010 aa). Residues 361-370 are compositionally biased toward basic residues; sequence RRRYRRKAHS. Disordered stretches follow at residues 361-382, 401-492, and 1843-1869; these read RRRYRRKAHSKLISDTDNSSQQ, SGNP…QVSE, and FLGSLSTSPDGQQSETERTPEHGSFKP. Composition is skewed to polar residues over residues 373–382, 454–490, and 1846–1856; these read ISDTDNSSQQ, NFASTMLIGNTDVLNGSSHNQQPSQISSHSWENNEQV, and SLSTSPDGQQS. Basic and acidic residues predominate over residues 1857–1866; sequence ETERTPEHGS.

This sequence belongs to the TamB family. As to quaternary structure, part of the TIC complex, which can interact with components of the TOC complex to form a larger import complex. As to expression, highly expressed in third leaf and developing seeds. Expressed in anthers, pistils, flag leaves and young panicles.

It localises to the plastid. Its subcellular location is the chloroplast inner membrane. It is found in the chloroplast intermembrane space. The protein resides in the chloroplast. The protein localises to the amyloplast. In terms of biological role, part of the inner chloroplast membrane translocon complex (TIC) which associates with the outer chloroplast membrane translocon complex (TOC) and forms a supercomplex involved in protein precursor import into the chloroplast stroma. Required for the regulation of starch granule size in amyloplasts. In Oryza sativa subsp. japonica (Rice), this protein is Protein SUBSTANDARD STARCH GRAIN 4, chloroplastic.